A 439-amino-acid polypeptide reads, in one-letter code: Tryptophan synthase beta chain 2 (439 aa).

An N6-(pyridoxal phosphate)lysine modification is found at lysine 99.

The protein belongs to the TrpB family. As to quaternary structure, tetramer of two alpha and two beta chains. The cofactor is pyridoxal 5'-phosphate.

It catalyses the reaction (1S,2R)-1-C-(indol-3-yl)glycerol 3-phosphate + L-serine = D-glyceraldehyde 3-phosphate + L-tryptophan + H2O. It participates in amino-acid biosynthesis; L-tryptophan biosynthesis; L-tryptophan from chorismate: step 5/5. Functionally, the beta subunit is responsible for the synthesis of L-tryptophan from indole and L-serine. This chain is Tryptophan synthase beta chain 2 (trpB2), found in Corynebacterium efficiens (strain DSM 44549 / YS-314 / AJ 12310 / JCM 11189 / NBRC 100395).